Reading from the N-terminus, the 119-residue chain is MSGHPGLTTHVLDTARGKPAAGVRVQLCRVTGDTRTPVTEAVTNSDGRTDAPLIERGSLKQGTYELTFHVADYFKGFVAAADPPFLDVVTLRFTVGDTSGHYHVPLVMTPWSYSTYRGS.

Positions 10, 48, and 116 each coordinate substrate.

This sequence belongs to the transthyretin family. 5-hydroxyisourate hydrolase subfamily. As to quaternary structure, homotetramer.

The catalysed reaction is 5-hydroxyisourate + H2O = 5-hydroxy-2-oxo-4-ureido-2,5-dihydro-1H-imidazole-5-carboxylate + H(+). The protein operates within purine metabolism; urate degradation; (S)-allantoin from urate: step 2/3. Catalyzes the hydrolysis of 5-hydroxyisourate (HIU) to 2-oxo-4-hydroxy-4-carboxy-5-ureidoimidazoline (OHCU). The sequence is that of 5-hydroxyisourate hydrolase from Deinococcus radiodurans (strain ATCC 13939 / DSM 20539 / JCM 16871 / CCUG 27074 / LMG 4051 / NBRC 15346 / NCIMB 9279 / VKM B-1422 / R1).